Consider the following 714-residue polypeptide: NCK-interacting protein with SH3 domain (714 aa).

Positions 1-58 (MYRALYAFRSAEPNAMAFAAGETFLVLERSSTHWWLAARARSGETGYVPPAYLHRLQG) constitute an SH3 domain. Disordered stretches follow at residues 103–126 (TLSR…DHHL) and 139–298 (RTGF…AAET). The span at 106–121 (RRGTSASSATVMTPST) shows a compositional bias: polar residues. Ser-120 is modified (phosphoserine). The Nuclear localization signal motif lies at 168-185 (RRAAPTTPPPPVKRRDRE). Thr-174 carries the phosphothreonine modification. The segment covering 200 to 215 (SGGSSVSSGSSASSTS) has biased composition (low complexity). The span at 216-226 (MDTLYTGSSPS) shows a compositional bias: polar residues. The segment covering 252 to 263 (QPSPSKAPSPEP) has biased composition (pro residues). 3 positions are modified to phosphoserine: Ser-260, Ser-286, and Ser-673.

As to quaternary structure, associates with the intermediate filaments, vimentin and desmin. Binds the first and third SH3 domains of NCK. Binds the proline-rich domains of N-WASP through its SH3 domain. Similarly, binds diaphanous protein homolog 1 (DRF1). Binds the SH3 domains of GRB2 through its proline-rich domains. Interacts with FASLG.

The protein localises to the nucleus. Functionally, has an important role in stress fiber formation induced by active diaphanous protein homolog 1 (DRF1). Induces microspike formation, in vivo. In vitro, stimulates N-WASP-induced ARP2/3 complex activation in the absence of CDC42. May play an important role in the maintenance of sarcomere and/or in the assembly of myofibrils into sarcomeres. Implicated in regulation of actin polymerization and cell adhesion. The chain is NCK-interacting protein with SH3 domain (Nckipsd) from Mus musculus (Mouse).